Here is a 575-residue protein sequence, read N- to C-terminus: TOX high mobility group box family member 3 (575 aa).

Disordered stretches follow at residues 189-258 (LGGA…QKPV) and 516-575 (QQLQ…VSIF). The segment covering 195 to 214 (SHTSPSPPASKSATPSPSSS) has biased composition (low complexity). The segment covering 222–238 (DANRAIGEKRTAPDSGK) has biased composition (basic and acidic residues). A compositionally biased stretch (basic residues) spans 239 to 249 (KPKTPKKKKKK). Positions 254–322 (PQKPVSAYAL…EYLKALAAYR (69 aa)) form a DNA-binding region, HMG box. Residues 516 to 526 (QQLQHMQHQSQ) show a composition bias toward low complexity. Positions 527 to 541 (PSPRQHSPVTSQITS) are enriched in polar residues. The segment covering 548–575 (SPQPASQQHQPQIQSQTQTQVLPQVSIF) has biased composition (low complexity).

As to quaternary structure, homodimer. Interacts (via HGM box) with CITED1 (via C-terminus); the interaction increases estrogen-response element (ERE)-dependent transcription and protection against cell death. Interacts with CREB1 (phosphorylated form). Interacts with CREB1; the interaction is not depolarization dependent. Interacts with CREBBP (via C-terminus).

Its subcellular location is the nucleus. In terms of biological role, transcriptional coactivator of the p300/CBP-mediated transcription complex. Activates transactivation through cAMP response element (CRE) sites. Protects against cell death by inducing antiapoptotic and repressing pro-apoptotic transcripts. Stimulates transcription from the estrogen-responsive or BCL-2 promoters. Required for depolarization-induced transcription activation of the C-FOS promoter in neurons. Associates with chromatin to the estrogen-responsive C3 promoter region. The chain is TOX high mobility group box family member 3 (Tox3) from Mus musculus (Mouse).